The sequence spans 80 residues: RNA-binding protein Hfq (80 aa).

One can recognise a Sm domain in the interval 7-67 (ESFLNTARKK…ITTIVPHERL (61 aa)).

The protein belongs to the Hfq family. Homohexamer.

RNA chaperone that binds small regulatory RNA (sRNAs) and mRNAs to facilitate mRNA translational regulation in response to envelope stress, environmental stress and changes in metabolite concentrations. Also binds with high specificity to tRNAs. This Aquifex aeolicus (strain VF5) protein is RNA-binding protein Hfq.